An 88-amino-acid polypeptide reads, in one-letter code: Eclosion hormone (88 aa).

The signal sequence occupies residues 1-26; sequence MAGKVTVAFFMFAMIAFLANFGYVEC. 3 cysteine pairs are disulfide-bonded: Cys40-Cys64, Cys44-Cys60, and Cys47-Cys75.

It belongs to the insect eclosion hormone family.

It is found in the secreted. In terms of biological role, neuropeptide that triggers the performance of ecdysis behaviors at the end of a molt. It triggers adult behavior patterns: larval, pupal and adult ecdysis, and plasticization during the molt. The protein is Eclosion hormone of Manduca sexta (Tobacco hawkmoth).